Consider the following 184-residue polypeptide: ATP-dependent protease subunit HslV (184 aa).

The active site involves Thr2. Residues Gly157, Cys160, and Thr163 each coordinate Na(+).

This sequence belongs to the peptidase T1B family. HslV subfamily. In terms of assembly, a double ring-shaped homohexamer of HslV is capped on each side by a ring-shaped HslU homohexamer. The assembly of the HslU/HslV complex is dependent on binding of ATP.

Its subcellular location is the cytoplasm. The catalysed reaction is ATP-dependent cleavage of peptide bonds with broad specificity.. Allosterically activated by HslU binding. Its function is as follows. Protease subunit of a proteasome-like degradation complex believed to be a general protein degrading machinery. In Vibrio vulnificus (strain CMCP6), this protein is ATP-dependent protease subunit HslV.